The sequence spans 305 residues: Protein-methionine-sulfoxide reductase catalytic subunit MsrP (305 aa).

The segment at residues 1-54 is a signal peptide (tat-type signal); that stretch reads MLIRKPADHLPSEITSESVYFNRRQFMAGAAGLLLSAETLAGLAAKKSPLSQLA. Mo-molybdopterin is bound by residues asparagine 69, 72–73, cysteine 126, threonine 161, asparagine 209, arginine 214, and 225–227; these read YE and SIK.

Belongs to the MsrP family. Heterodimer of a catalytic subunit (MsrP) and a heme-binding subunit (MsrQ). The cofactor is Mo-molybdopterin. In terms of processing, predicted to be exported by the Tat system. The position of the signal peptide cleavage has not been experimentally proven.

It is found in the periplasm. The catalysed reaction is L-methionyl-[protein] + a quinone + H2O = L-methionyl-(S)-S-oxide-[protein] + a quinol. The enzyme catalyses L-methionyl-[protein] + a quinone + H2O = L-methionyl-(R)-S-oxide-[protein] + a quinol. Functionally, part of the MsrPQ system that repairs oxidized periplasmic proteins containing methionine sulfoxide residues (Met-O), using respiratory chain electrons. Thus protects these proteins from oxidative-stress damage caused by reactive species of oxygen and chlorine generated by the host defense mechanisms. MsrPQ is essential for the maintenance of envelope integrity under bleach stress, rescuing a wide series of structurally unrelated periplasmic proteins from methionine oxidation. The catalytic subunit MsrP is non-stereospecific, being able to reduce both (R-) and (S-) diastereoisomers of methionine sulfoxide. In Chromobacterium violaceum (strain ATCC 12472 / DSM 30191 / JCM 1249 / CCUG 213 / NBRC 12614 / NCIMB 9131 / NCTC 9757 / MK), this protein is Protein-methionine-sulfoxide reductase catalytic subunit MsrP.